Reading from the N-terminus, the 533-residue chain is Tyrosinase (533 aa).

The N-terminal stretch at 1–18 (MFLAVLYCLLWSFQISDG) is a signal peptide. Over 19 to 476 (HFPRACASSK…YLEQASRIWP (458 aa)) the chain is Lumenal, melanosome. N-linked (GlcNAc...) asparagine glycans are attached at residues asparagine 86, asparagine 111, and asparagine 161. Residues histidine 180, histidine 202, and histidine 211 each coordinate Cu cation. N-linked (GlcNAc...) asparagine glycans are attached at residues asparagine 230 and asparagine 337. Residues histidine 363 and histidine 367 each coordinate Cu cation. An N-linked (GlcNAc...) asparagine glycan is attached at asparagine 371. Residue histidine 390 participates in Cu cation binding. A helical membrane pass occupies residues 477–497 (WLLGAALVGAVIAAALSGLSS). At 498 to 533 (RLCLQKKKKKKQPQEERQPLLMDKDDYHSLLYQSHL) the chain is on the cytoplasmic side.

This sequence belongs to the tyrosinase family. In terms of assembly, forms an OPN3-dependent complex with DCT in response to blue light in melanocytes. Cu(2+) is required as a cofactor. Glycosylated. Expressed in the skin.

Its subcellular location is the melanosome membrane. It is found in the melanosome. The enzyme catalyses 2 L-dopa + O2 = 2 L-dopaquinone + 2 H2O. The catalysed reaction is L-tyrosine + O2 = L-dopaquinone + H2O. It catalyses the reaction 2 5,6-dihydroxyindole-2-carboxylate + O2 = 2 indole-5,6-quinone-2-carboxylate + 2 H2O. In terms of biological role, this is a copper-containing oxidase that functions in the formation of pigments such as melanins and other polyphenolic compounds. Catalyzes the initial and rate limiting step in the cascade of reactions leading to melanin production from tyrosine. In addition to hydroxylating tyrosine to DOPA (3,4-dihydroxyphenylalanine), also catalyzes the oxidation of DOPA to DOPA-quinone, and possibly the oxidation of DHI (5,6-dihydroxyindole) to indole-5,6 quinone. This chain is Tyrosinase (Tyr), found in Mus musculus (Mouse).